An 88-amino-acid polypeptide reads, in one-letter code: MRVKLEHSERGMVTYSQVKKIRENDMYMKIYQEGGYHRINLVNIRKRFIVSGDKEKVSLCLGGCKPIFKGEYDSCPECGAEVRIKEVK.

This is an uncharacterized protein from Haloarcula hispanica (His1V).